The primary structure comprises 117 residues: Ribonuclease P protein component 4 (117 aa).

Cys-63, Cys-66, Cys-92, and Cys-95 together coordinate Zn(2+).

The protein belongs to the eukaryotic/archaeal RNase P protein component 4 family. Consists of a catalytic RNA component and at least 4 protein subunits. Forms a subcomplex with Rnp1 which stimulates the catalytic RNA. Zn(2+) serves as cofactor.

The protein localises to the cytoplasm. The enzyme catalyses Endonucleolytic cleavage of RNA, removing 5'-extranucleotides from tRNA precursor.. Functionally, part of ribonuclease P, a protein complex that generates mature tRNA molecules by cleaving their 5'-ends. The RNA is catalytic, but its KM for pre-tRNA is 170-fold decreased in the presence of the 4 known protein subunits (Rnp1-4). The protein subunits also decrease the amount of Mg(2+) needed for activity. This is Ribonuclease P protein component 4 from Pyrococcus furiosus (strain ATCC 43587 / DSM 3638 / JCM 8422 / Vc1).